Consider the following 116-residue polypeptide: Iron-sulfur cluster insertion protein ErpA (116 aa).

Positions 44, 108, and 110 each coordinate iron-sulfur cluster.

This sequence belongs to the HesB/IscA family. As to quaternary structure, homodimer. Iron-sulfur cluster is required as a cofactor.

Required for insertion of 4Fe-4S clusters for at least IspG. This Shewanella baltica (strain OS223) protein is Iron-sulfur cluster insertion protein ErpA.